Reading from the N-terminus, the 89-residue chain is Arminin 7591 (89 aa).

A signal peptide spans 1 to 18; the sequence is MRSAFAVLFLALIAITYS. Positions 19–58 are excised as a propeptide; the sequence is KNYEDVKEEIKNEVENEILKDLEEDVNEFDDNVQEEVNDA. Leu86 carries the leucine amide modification.

Belongs to the arminin family. As to expression, expressed in entodermal epithelium along the body column.

It is found in the secreted. Its subcellular location is the target cell membrane. Functionally, antimicrobial peptide with a broad-spectrum antimicrobial activity. Keeps its antibacterial activity under a wide range of salt concentrations that mimic physiological conditions of human blood, which is surprising, since Hydra is an obligate freshwater animal with nearly no salt tolerance. Does not affect red blood cells. This chain is Arminin 7591, found in Hydra vulgaris (Hydra).